The chain runs to 354 residues: Inactive ADP-ribosyltransferase arh2 (354 aa).

The protein belongs to the ADP-ribosylglycohydrolase family. Expressed in heart (at protein level). A short form is detected in both heart and tadpole tail (at protein level).

It localises to the cytoplasm. Its subcellular location is the myofibril. The protein resides in the sarcomere. Required for myofibril assembly and outgrowth of the cardiac chambers in the developing heart. Appears to be catalytically inactive, showing no activity against O-acetyl-ADP-ribose. The chain is Inactive ADP-ribosyltransferase arh2 (adprhl1) from Xenopus laevis (African clawed frog).